A 341-amino-acid chain; its full sequence is Aromatic amino acid aminotransferase (341 aa).

Lysine 213 is subject to N6-(pyridoxal phosphate)lysine.

It belongs to the class-II pyridoxal-phosphate-dependent aminotransferase family. In terms of assembly, homodimer. Pyridoxal 5'-phosphate serves as cofactor.

The catalysed reaction is an aromatic L-alpha-amino acid + 2-oxoglutarate = an aromatic oxo-acid + L-glutamate. Its function is as follows. Aminotransferase that catalyzes the conversion of aromatic amino acids and 2-oxoglutarate into corresponding aromatic oxo acids and L-glutamate. The protein is Aromatic amino acid aminotransferase of Corynebacterium glutamicum (strain R).